Here is a 267-residue protein sequence, read N- to C-terminus: NH(3)-dependent NAD(+) synthetase (267 aa).

Position 38–45 (38–45 (GISGGVDS)) interacts with ATP. Aspartate 44 serves as a coordination point for Mg(2+). Residue arginine 123 coordinates deamido-NAD(+). Threonine 143 lines the ATP pocket. Glutamate 148 serves as a coordination point for Mg(2+). Deamido-NAD(+) is bound by residues lysine 156 and aspartate 163. ATP-binding residues include lysine 172 and serine 193. 250 to 251 (HK) contacts deamido-NAD(+).

This sequence belongs to the NAD synthetase family. In terms of assembly, homodimer.

It catalyses the reaction deamido-NAD(+) + NH4(+) + ATP = AMP + diphosphate + NAD(+) + H(+). It participates in cofactor biosynthesis; NAD(+) biosynthesis; NAD(+) from deamido-NAD(+) (ammonia route): step 1/1. Its function is as follows. Catalyzes the ATP-dependent amidation of deamido-NAD to form NAD. Uses ammonia as a nitrogen source. The protein is NH(3)-dependent NAD(+) synthetase of Pyrobaculum aerophilum (strain ATCC 51768 / DSM 7523 / JCM 9630 / CIP 104966 / NBRC 100827 / IM2).